The following is a 323-amino-acid chain: tRNA U34 carboxymethyltransferase (323 aa).

Carboxy-S-adenosyl-L-methionine contacts are provided by residues K91, W105, K110, G130, 181–182, M196, Y200, and R315; that span reads IE.

Belongs to the class I-like SAM-binding methyltransferase superfamily. CmoB family. Homotetramer.

The catalysed reaction is carboxy-S-adenosyl-L-methionine + 5-hydroxyuridine(34) in tRNA = 5-carboxymethoxyuridine(34) in tRNA + S-adenosyl-L-homocysteine + H(+). Its function is as follows. Catalyzes carboxymethyl transfer from carboxy-S-adenosyl-L-methionine (Cx-SAM) to 5-hydroxyuridine (ho5U) to form 5-carboxymethoxyuridine (cmo5U) at position 34 in tRNAs. This Sodalis glossinidius (strain morsitans) protein is tRNA U34 carboxymethyltransferase.